A 155-amino-acid polypeptide reads, in one-letter code: SsrA-binding protein (155 aa).

Belongs to the SmpB family.

It is found in the cytoplasm. Its function is as follows. Required for rescue of stalled ribosomes mediated by trans-translation. Binds to transfer-messenger RNA (tmRNA), required for stable association of tmRNA with ribosomes. tmRNA and SmpB together mimic tRNA shape, replacing the anticodon stem-loop with SmpB. tmRNA is encoded by the ssrA gene; the 2 termini fold to resemble tRNA(Ala) and it encodes a 'tag peptide', a short internal open reading frame. During trans-translation Ala-aminoacylated tmRNA acts like a tRNA, entering the A-site of stalled ribosomes, displacing the stalled mRNA. The ribosome then switches to translate the ORF on the tmRNA; the nascent peptide is terminated with the 'tag peptide' encoded by the tmRNA and targeted for degradation. The ribosome is freed to recommence translation, which seems to be the essential function of trans-translation. This Streptococcus pyogenes serotype M4 (strain MGAS10750) protein is SsrA-binding protein.